Consider the following 170-residue polypeptide: Protein SprT (170 aa).

The SprT-like domain maps to 23–164 (QLARQHFSVE…CRQCGDKLKF (142 aa)). A Zn(2+)-binding site is contributed by histidine 78. Glutamate 79 is a catalytic residue. Histidine 82 contacts Zn(2+).

The protein belongs to the SprT family. Requires Zn(2+) as cofactor.

Its subcellular location is the cytoplasm. The sequence is that of Protein SprT from Serratia proteamaculans (strain 568).